The sequence spans 135 residues: Cytochrome c-type biogenesis protein CcmE (135 aa).

Residues 1 to 8 (MLLLRWKR) lie on the Cytoplasmic side of the membrane. The helical; Signal-anchor for type II membrane protein transmembrane segment at 9 to 29 (FWFLSLGILLFSGVVSLMLFN) threads the bilayer. Residues 30-135 (LSESISFFYL…EDFIKSVRGE (106 aa)) lie on the Periplasmic side of the membrane. Residues His-118 and Tyr-122 each contribute to the heme site.

It belongs to the CcmE/CycJ family.

It localises to the cell inner membrane. Its function is as follows. Heme chaperone required for the biogenesis of c-type cytochromes. Transiently binds heme delivered by CcmC and transfers the heme to apo-cytochromes in a process facilitated by CcmF and CcmH. This is Cytochrome c-type biogenesis protein CcmE from Neorickettsia sennetsu (strain ATCC VR-367 / Miyayama) (Ehrlichia sennetsu).